The following is a 251-amino-acid chain: MIESELATSRWSLMLEADIATQTTRSLTNELSFIVAGLRPSTKESVLHFLELIFINLKYQSKKWLYSLVICKSLIALLGRKRLSANVRKIVRFLNVIICVIGLWKGLSAMSGKNTFINGLQSYLISETALPELGSFQELSTSSLGSFRMFQQIAVGFVDALFCTRIPASLWIKYKEYTTSAETTVPQECGLCMMCVQRGDERVAITTPYTTDCGHTYCYACIMSRLKLVNNVSCPICKHRIRFALPDQTMG.

The segment at 192–238 adopts an RING-type zinc-finger fold; sequence CMMCVQRGDERVAITTPYTTDCGHTYCYACIMSRLKLVNNVSCPICK.

It localises to the cytoplasm. This is an uncharacterized protein from Schizosaccharomyces pombe (strain 972 / ATCC 24843) (Fission yeast).